The primary structure comprises 108 residues: Insulin (108 aa).

The first 23 residues, 1 to 23 (MALWILLPLLALLILWGPDPAQA), serve as a signal peptide directing secretion. 2 disulfide bridges follow: Cys30–Cys94 and Cys43–Cys107. Positions 57 to 88 (EVEDPQVGQVELGAGPGAGSEQTLALEVARQA) are cleaved as a propeptide — c peptide.

The protein belongs to the insulin family. In terms of assembly, heterodimer of a B chain and an A chain linked by two disulfide bonds.

Its subcellular location is the secreted. Insulin decreases blood glucose concentration. It increases cell permeability to monosaccharides, amino acids and fatty acids. It accelerates glycolysis, the pentose phosphate cycle, and glycogen synthesis in liver. This is Insulin (INS) from Rodentia sp.